A 217-amino-acid chain; its full sequence is Ribosomal RNA small subunit methyltransferase G (217 aa).

Residues Gly79, Leu84, 130–131 (IE), and Arg148 each bind S-adenosyl-L-methionine.

It belongs to the methyltransferase superfamily. RNA methyltransferase RsmG family.

It localises to the cytoplasm. The catalysed reaction is guanosine(527) in 16S rRNA + S-adenosyl-L-methionine = N(7)-methylguanosine(527) in 16S rRNA + S-adenosyl-L-homocysteine. Its function is as follows. Specifically methylates the N7 position of guanine in position 527 of 16S rRNA. The chain is Ribosomal RNA small subunit methyltransferase G from Desulfotalea psychrophila (strain LSv54 / DSM 12343).